Reading from the N-terminus, the 477-residue chain is Glutamate--tRNA ligase 2 (477 aa).

The 'HIGH' region signature appears at 12–22 (PSPTGRMHLGN). Positions 109, 111, 136, and 138 each coordinate Zn(2+). The 'KMSKS' region motif lies at 253 to 257 (PLSKR). K256 contributes to the ATP binding site.

The protein belongs to the class-I aminoacyl-tRNA synthetase family. Glutamate--tRNA ligase type 1 subfamily. Monomer. Zn(2+) is required as a cofactor.

It is found in the cytoplasm. The enzyme catalyses tRNA(Glu) + L-glutamate + ATP = L-glutamyl-tRNA(Glu) + AMP + diphosphate. In terms of biological role, catalyzes the attachment of glutamate to tRNA(Glu) in a two-step reaction: glutamate is first activated by ATP to form Glu-AMP and then transferred to the acceptor end of tRNA(Glu). This is Glutamate--tRNA ligase 2 from Alkalilimnicola ehrlichii (strain ATCC BAA-1101 / DSM 17681 / MLHE-1).